The following is a 357-amino-acid chain: 3-isopropylmalate dehydrogenase (357 aa).

4 residues coordinate substrate: R97, R107, R135, and D224. Mg(2+)-binding residues include D224, D248, and D252. Residue 282–294 (GSAPDIAGQDKAN) participates in NAD(+) binding.

This sequence belongs to the isocitrate and isopropylmalate dehydrogenases family. LeuB type 1 subfamily. As to quaternary structure, homodimer. The cofactor is Mg(2+). Mn(2+) serves as cofactor.

Its subcellular location is the cytoplasm. The catalysed reaction is (2R,3S)-3-isopropylmalate + NAD(+) = 4-methyl-2-oxopentanoate + CO2 + NADH. Its pathway is amino-acid biosynthesis; L-leucine biosynthesis; L-leucine from 3-methyl-2-oxobutanoate: step 3/4. Its function is as follows. Catalyzes the oxidation of 3-carboxy-2-hydroxy-4-methylpentanoate (3-isopropylmalate) to 3-carboxy-4-methyl-2-oxopentanoate. The product decarboxylates to 4-methyl-2 oxopentanoate. The polypeptide is 3-isopropylmalate dehydrogenase (Parasynechococcus marenigrum (strain WH8102)).